Consider the following 162-residue polypeptide: Methyl-coenzyme M reductase II operon protein D (162 aa).

In terms of assembly, MCR is composed of three subunits: alpha, beta, and gamma. The function of protein D is not known.

In Methanothermobacter thermautotrophicus (strain ATCC 29096 / DSM 1053 / JCM 10044 / NBRC 100330 / Delta H) (Methanobacterium thermoautotrophicum), this protein is Methyl-coenzyme M reductase II operon protein D (mrtD).